Here is a 370-residue protein sequence, read N- to C-terminus: Neutral protease 2 homolog AFUA_4G13750 (370 aa).

The first 19 residues, 1–19, serve as a signal peptide directing secretion; it reads MKVTILASAILALINGALA. Positions 20 to 172 are excised as a propeptide; the sequence is LPANTPTLDV…PQAIKLLDRR (153 aa). Cystine bridges form between C178–C250 and C257–C275. H300 is a Zn(2+) binding site. The active site involves E301. Residues H304 and D315 each contribute to the Zn(2+) site.

This sequence belongs to the peptidase M35 family. The cofactor is Zn(2+).

It is found in the secreted. It catalyses the reaction Preferential cleavage of bonds with hydrophobic residues in P1'. Also 3-Asn-|-Gln-4 and 8-Gly-|-Ser-9 bonds in insulin B chain.. Secreted metalloproteinase that allows assimilation of proteinaceous substrates. Shows high activities on basic nuclear substrates such as histone and protamine. May be involved in virulence. This is Neutral protease 2 homolog AFUA_4G13750 from Aspergillus fumigatus (strain ATCC MYA-4609 / CBS 101355 / FGSC A1100 / Af293) (Neosartorya fumigata).